The chain runs to 316 residues: Aspartate carbamoyltransferase catalytic subunit (316 aa).

The carbamoyl phosphate site is built by R66 and T67. K94 contributes to the L-aspartate binding site. Residues R116, H146, and Q149 each coordinate carbamoyl phosphate. Residues R179 and R234 each coordinate L-aspartate. Residues G275 and P276 each coordinate carbamoyl phosphate.

This sequence belongs to the aspartate/ornithine carbamoyltransferase superfamily. ATCase family. Heterododecamer (2C3:3R2) of six catalytic PyrB chains organized as two trimers (C3), and six regulatory PyrI chains organized as three dimers (R2).

The enzyme catalyses carbamoyl phosphate + L-aspartate = N-carbamoyl-L-aspartate + phosphate + H(+). The protein operates within pyrimidine metabolism; UMP biosynthesis via de novo pathway; (S)-dihydroorotate from bicarbonate: step 2/3. Functionally, catalyzes the condensation of carbamoyl phosphate and aspartate to form carbamoyl aspartate and inorganic phosphate, the committed step in the de novo pyrimidine nucleotide biosynthesis pathway. The chain is Aspartate carbamoyltransferase catalytic subunit from Nitrosomonas eutropha (strain DSM 101675 / C91 / Nm57).